The primary structure comprises 26 residues: Thioredoxin H-type (26 aa).

The protein belongs to the thioredoxin family. Plant H-type subfamily.

It localises to the cytoplasm. Functionally, participates in various redox reactions through the reversible oxidation of the active center dithiol to a disulfide. The H form is known to activate a number of cytosolic enzymes. The protein is Thioredoxin H-type of Populus euphratica (Euphrates poplar).